A 125-amino-acid polypeptide reads, in one-letter code: Small ribosomal subunit protein uS13 (125 aa).

Residues 93–125 form a disordered region; sequence RAGLPVRGQRTRTNARTRRGARKTVAGKKKATR. Residues 101–125 show a composition bias toward basic residues; sequence QRTRTNARTRRGARKTVAGKKKATR.

This sequence belongs to the universal ribosomal protein uS13 family. As to quaternary structure, part of the 30S ribosomal subunit. Forms a loose heterodimer with protein S19. Forms two bridges to the 50S subunit in the 70S ribosome.

Its function is as follows. Located at the top of the head of the 30S subunit, it contacts several helices of the 16S rRNA. In the 70S ribosome it contacts the 23S rRNA (bridge B1a) and protein L5 of the 50S subunit (bridge B1b), connecting the 2 subunits; these bridges are implicated in subunit movement. Contacts the tRNAs in the A and P-sites. The polypeptide is Small ribosomal subunit protein uS13 (Synechococcus elongatus (strain ATCC 33912 / PCC 7942 / FACHB-805) (Anacystis nidulans R2)).